A 346-amino-acid chain; its full sequence is Probable dual-specificity RNA methyltransferase RlmN (346 aa).

Glu-76 serves as the catalytic Proton acceptor. Residues 97 to 329 (SYDRATICVS…TFIRKPRGRD (233 aa)) form the Radical SAM core domain. The cysteines at positions 104 and 334 are disulfide-linked. [4Fe-4S] cluster is bound by residues Cys-111, Cys-115, and Cys-118. S-adenosyl-L-methionine is bound by residues 162–163 (GE), Ser-192, 215–217 (SLN), and Asn-291. Cys-334 acts as the S-methylcysteine intermediate in catalysis.

It belongs to the radical SAM superfamily. RlmN family. [4Fe-4S] cluster is required as a cofactor.

It localises to the cytoplasm. It catalyses the reaction adenosine(2503) in 23S rRNA + 2 reduced [2Fe-2S]-[ferredoxin] + 2 S-adenosyl-L-methionine = 2-methyladenosine(2503) in 23S rRNA + 5'-deoxyadenosine + L-methionine + 2 oxidized [2Fe-2S]-[ferredoxin] + S-adenosyl-L-homocysteine. The catalysed reaction is adenosine(37) in tRNA + 2 reduced [2Fe-2S]-[ferredoxin] + 2 S-adenosyl-L-methionine = 2-methyladenosine(37) in tRNA + 5'-deoxyadenosine + L-methionine + 2 oxidized [2Fe-2S]-[ferredoxin] + S-adenosyl-L-homocysteine. Specifically methylates position 2 of adenine 2503 in 23S rRNA and position 2 of adenine 37 in tRNAs. The chain is Probable dual-specificity RNA methyltransferase RlmN from Koribacter versatilis (strain Ellin345).